The primary structure comprises 133 residues: Fluoride-specific ion channel FluC 4 (133 aa).

The next 3 helical transmembrane spans lie at isoleucine 7–valine 27, tryptophan 37–glycine 57, and leucine 60–glycine 80. Positions 79 and 82 each coordinate Na(+). The chain crosses the membrane as a helical span at residues isoleucine 107 to tryptophan 127.

This sequence belongs to the fluoride channel Fluc/FEX (TC 1.A.43) family.

The protein resides in the cell inner membrane. It catalyses the reaction fluoride(in) = fluoride(out). With respect to regulation, na(+) is not transported, but it plays an essential structural role and its presence is essential for fluoride channel function. Functionally, fluoride-specific ion channel. Important for reducing fluoride concentration in the cell, thus reducing its toxicity. In Brucella abortus biovar 1 (strain 9-941), this protein is Fluoride-specific ion channel FluC 4.